Here is a 98-residue protein sequence, read N- to C-terminus: MSLTYMNMFMAFTISLLGLLMYRSHMMSSLLCLEGMMLSLFVMMTMTILNTHLTLASMLPIILLVFAACEAALGLSLLVMVSTTYGMDYVQNLNLLQC.

3 consecutive transmembrane segments (helical) span residues 1–21 (MSLT…GLLM), 29–49 (SLLC…MTIL), and 61–81 (IILL…LVMV).

It belongs to the complex I subunit 4L family. Core subunit of respiratory chain NADH dehydrogenase (Complex I) which is composed of 45 different subunits.

It is found in the mitochondrion inner membrane. The catalysed reaction is a ubiquinone + NADH + 5 H(+)(in) = a ubiquinol + NAD(+) + 4 H(+)(out). Core subunit of the mitochondrial membrane respiratory chain NADH dehydrogenase (Complex I) which catalyzes electron transfer from NADH through the respiratory chain, using ubiquinone as an electron acceptor. Part of the enzyme membrane arm which is embedded in the lipid bilayer and involved in proton translocation. In Stenoderma rufum (Red fruit bat), this protein is NADH-ubiquinone oxidoreductase chain 4L (MT-ND4L).